We begin with the raw amino-acid sequence, 422 residues long: Steroid hormone receptor ERR1 (422 aa).

The disordered stretch occupies residues 1–66 (MSSQVVGIEP…EGAGSGEQGS (66 aa)). Residues 1–76 (MSSQVVGIEP…GKLVLSSLPK (76 aa)) form a repressor domain region. Lys-14 participates in a covalent cross-link: Glycyl lysine isopeptide (Lys-Gly) (interchain with G-Cter in SUMO). 2 positions are modified to phosphoserine: Ser-19 and Ser-22. Positions 76–151 (KRLCLVCGDV…VGMLKEGVRL (76 aa)) form a DNA-binding region, nuclear receptor. NR C4-type zinc fingers lie at residues 79-99 (CLVC…CEAC) and 115-134 (CPAS…CQAC). 4 positions are modified to N6-acetyllysine; by PCAF/KAT2B: Lys-129, Lys-138, Lys-160, and Lys-162. Residue Lys-189 forms a Glycyl lysine isopeptide (Lys-Gly) (interchain with G-Cter in SUMO2) linkage. Residues 192–420 (PVNALVSHLL…KLFLEMLEAM (229 aa)) form the NR LBD domain. Lys-402 participates in a covalent cross-link: Glycyl lysine isopeptide (Lys-Gly) (interchain with G-Cter in SUMO); alternate. Lys-402 is covalently cross-linked (Glycyl lysine isopeptide (Lys-Gly) (interchain with G-Cter in SUMO2); alternate). The AF-2 domain stretch occupies residues 402-422 (KLEGKVPMHKLFLEMLEAMMD).

This sequence belongs to the nuclear hormone receptor family. NR3 subfamily. Binds DNA as a monomer or a homodimer. Interacts (via the AF2 domain) with coactivator PPARGC1A (via the L3 motif); the interaction greatly enhances transcriptional activity of genes involved in energy metabolism. Interacts with PIAS4; the interaction enhances sumoylation. Interacts with MAPK15; promotes re-localization of ESRRA to the cytoplasm through a XPO1-dependent mechanism then inhibits ESRRA transcriptional activity. In terms of processing, phosphorylation on Ser-19 enhances sumoylation on Lys-14 increasing repression of transcriptional activity. Post-translationally, sumoylated with SUMO2. Main site is Lys-14 which is enhanced by phosphorylation on Ser-19, cofactor activation, and by interaction with PIAS4. Sumoylation enhances repression of transcriptional activity, but has no effect on subcellular location nor on DNA binding. Reversibly acetylated. Acetylation by PCAF/KAT2 at Lys-129, Lys-138, Lys-160 and Lys-162 and PCAF/KAT2 decreases transcriptional activity probably by inhibiting DNA-binding activity; deacetylation involves SIRT1 and HDAC8 and increases DNA-binding. As to expression, most highly expressed in kidney, heart, and brown adipocytes. Also found in uterus, cervix and vagina.

The protein localises to the nucleus. It localises to the cytoplasm. In terms of biological role, binds to an ERR-alpha response element (ERRE) containing a single consensus half-site, 5'-TNAAGGTCA-3'. Can bind to the medium-chain acyl coenzyme A dehydrogenase (MCAD) response element NRRE-1 and may act as an important regulator of MCAD promoter. Binds to the C1 region of the lactoferrin gene promoter. Requires dimerization and the coactivator, PGC-1A, for full activity. The ERRalpha/PGC1alpha complex is a regulator of energy metabolism. Induces the expression of PERM1 in the skeletal muscle. The sequence is that of Steroid hormone receptor ERR1 (Esrra) from Mus musculus (Mouse).